Reading from the N-terminus, the 160-residue chain is Phosphatidylinositol N-acetylglucosaminyltransferase subunit gpi15 (160 aa).

Transmembrane regions (helical) follow at residues 22-42 and 48-68; these read GTQM…SLAI and IIIT…ISGV.

This sequence belongs to the PIGH family.

Its subcellular location is the endoplasmic reticulum membrane. The enzyme catalyses a 1,2-diacyl-sn-glycero-3-phospho-(1D-myo-inositol) + UDP-N-acetyl-alpha-D-glucosamine = a 6-(N-acetyl-alpha-D-glucosaminyl)-1-(1,2-diacyl-sn-glycero-3-phospho)-1D-myo-inositol + UDP + H(+). It functions in the pathway glycolipid biosynthesis; glycosylphosphatidylinositol-anchor biosynthesis. In terms of biological role, part of the complex catalyzing the transfer of N-acetylglucosamine from UDP-N-acetylglucosamine to phosphatidylinositol, the first step of GPI biosynthesis. This is Phosphatidylinositol N-acetylglucosaminyltransferase subunit gpi15 (gpi15) from Schizosaccharomyces pombe (strain 972 / ATCC 24843) (Fission yeast).